Consider the following 626-residue polypeptide: Chaperone protein DnaK (626 aa).

Phosphothreonine; by autocatalysis is present on T197. Basic and acidic residues-rich tracts occupy residues D512 to E528 and Q539 to I551. 2 disordered regions span residues D512 to I551 and D601 to E626.

This sequence belongs to the heat shock protein 70 family.

Functionally, acts as a chaperone. The protein is Chaperone protein DnaK of Campylobacter fetus subsp. fetus (strain 82-40).